The primary structure comprises 222 residues: N-(5'-phosphoribosyl)anthranilate isomerase (222 aa).

This sequence belongs to the TrpF family.

The enzyme catalyses N-(5-phospho-beta-D-ribosyl)anthranilate = 1-(2-carboxyphenylamino)-1-deoxy-D-ribulose 5-phosphate. It functions in the pathway amino-acid biosynthesis; L-tryptophan biosynthesis; L-tryptophan from chorismate: step 3/5. The sequence is that of N-(5'-phosphoribosyl)anthranilate isomerase from Rhizobium etli (strain CIAT 652).